The sequence spans 401 residues: Mu-type opioid receptor (401 aa).

Over 1 to 69 (MDSSAVPANA…CPPTGSPSMI (69 aa)) the chain is Extracellular. N-linked (GlcNAc...) asparagine glycans are attached at residues asparagine 9, asparagine 12, asparagine 34, asparagine 41, and asparagine 49. A helical membrane pass occupies residues 70 to 94 (TAITIMALYSIVCVVGLFGNFLVMY). At 95–107 (VIVRYTKMKTATN) the chain is on the cytoplasmic side. Residues 108 to 132 (IYIFNLALADALATSTLPFQSVNYL) form a helical membrane-spanning segment. The Extracellular segment spans residues 133–143 (MGTWPFGTILC). Cysteines 143 and 220 form a disulfide. Residues 144-166 (KIVISIDYYNMFTSIFTLCTMSV) traverse the membrane as a helical segment. Over 167 to 186 (DRYIAVCHPVKALDFRTPRN) the chain is Cytoplasmic. Tyrosine 169 bears the Phosphotyrosine mark. A helical transmembrane segment spans residues 187 to 208 (AKIINVCNWILSSAIGLPVMFM). Topologically, residues 209-231 (ATTKYRHGSIDCTLTFSHPTWYW) are extracellular. Residues 232–256 (ENLLKICVFIFAFIMPVLIITVCYG) traverse the membrane as a helical segment. At 257–280 (LMILRLKSVRMLSGSKEKDRNLRR) the chain is on the cytoplasmic side. The chain crosses the membrane as a helical span at residues 281–307 (ITRMVLVVVAVFIVCWTPIHIYVIIKA). Over 308–315 (LVTIPETT) the chain is Extracellular. A helical transmembrane segment spans residues 316-339 (FQTVSWHFCIALGYTNSCLNPVLY). Positions 335–339 (NPVLY) match the NPxxY; plays a role in stabilizing the activated conformation of the receptor motif. Over 340 to 401 (AFLDENFKRC…NLEAETAPLP (62 aa)) the chain is Cytoplasmic. Cysteine 354 carries S-palmitoyl cysteine lipidation. The tract at residues 365–388 (NSTRIRQNTRDHPSTANTVDRTNH) is disordered. Serine 366 carries the phosphoserine modification. The residue at position 373 (threonine 373) is a Phosphothreonine. Serine 378 is modified (phosphoserine). The residue at position 397 (threonine 397) is a Phosphothreonine.

This sequence belongs to the G-protein coupled receptor 1 family. In terms of assembly, forms homooligomers and heterooligomers with other GPCRs, such as OPRD1, OPRK1, OPRL1, NPFFR2, ADRA2A, SSTR2, CNR1 and CCR5 (probably in dimeric forms). Interacts with heterotrimeric G proteins; interaction with a heterotrimeric complex containing GNAI1, GNB1 and GNG2 stabilizes the active conformation of the receptor and increases its affinity for endomorphin-2, the synthetic opioid peptide DAMGO and for morphinan agonists. Interacts with PPL; the interaction disrupts agonist-mediated G-protein activation. Interacts (via C-terminus) with DNAJB4 (via C-terminus). Interacts with calmodulin; the interaction inhibits the constitutive activity of OPRM1; it abolishes basal and attenuates agonist-stimulated G-protein coupling. Interacts with FLNA, PLD2, RANBP9 and WLS and GPM6A. Interacts with RTP4. Interacts with SYP and GNAS. Interacts with RGS9, RGS17, RGS20, RGS4, PPP1R9B and HINT1. Phosphorylated. Differentially phosphorylated in basal and agonist-induced conditions. Agonist-mediated phosphorylation modulates receptor internalization. Phosphorylated by GRK2 in a agonist-dependent manner. Phosphorylation at Tyr-169 requires receptor activation, is dependent on non-receptor protein tyrosine kinase Src and results in a decrease in agonist efficacy by reducing G-protein coupling efficiency. Phosphorylated on tyrosine residues; the phosphorylation is involved in agonist-induced G-protein-independent receptor down-regulation. Phosphorylation at Ser-378 is involved in G-protein-dependent but not beta-arrestin-dependent activation of the ERK pathway. In terms of processing, ubiquitinated. A basal ubiquitination seems not to be related to degradation. Ubiquitination is increased upon formation of OPRM1:OPRD1 oligomers leading to proteasomal degradation; the ubiquitination is diminished by RTP4.

It is found in the cell membrane. The protein localises to the cell projection. Its subcellular location is the axon. The protein resides in the perikaryon. It localises to the dendrite. It is found in the endosome. In terms of biological role, receptor for endogenous opioids such as beta-endorphin and endomorphin. Receptor for natural and synthetic opioids including morphine, heroin, DAMGO, fentanyl, etorphine, buprenorphin and methadone. Also activated by enkephalin peptides, such as Met-enkephalin or Met-enkephalin-Arg-Phe, with higher affinity for Met-enkephalin-Arg-Phe. Agonist binding to the receptor induces coupling to an inactive GDP-bound heterotrimeric G-protein complex and subsequent exchange of GDP for GTP in the G-protein alpha subunit leading to dissociation of the G-protein complex with the free GTP-bound G-protein alpha and the G-protein beta-gamma dimer activating downstream cellular effectors. The agonist- and cell type-specific activity is predominantly coupled to pertussis toxin-sensitive G(i) and G(o) G alpha proteins, GNAI1, GNAI2, GNAI3 and GNAO1, and to a lesser extent to pertussis toxin-insensitive G alpha proteins GNAZ and GNA15. They mediate an array of downstream cellular responses, including inhibition of adenylate cyclase activity and both N-type and L-type calcium channels, activation of inward rectifying potassium channels, mitogen-activated protein kinase (MAPK), phospholipase C (PLC), phosphoinositide/protein kinase (PKC), phosphoinositide 3-kinase (PI3K) and regulation of NF-kappa-B. Also couples to adenylate cyclase stimulatory G alpha proteins. The selective temporal coupling to G-proteins and subsequent signaling can be regulated by RGSZ proteins, such as RGS9, RGS17 and RGS4. Phosphorylation by members of the GPRK subfamily of Ser/Thr protein kinases and association with beta-arrestins is involved in short-term receptor desensitization. Beta-arrestins associate with the GPRK-phosphorylated receptor and uncouple it from the G-protein thus terminating signal transduction. The phosphorylated receptor is internalized through endocytosis via clathrin-coated pits which involves beta-arrestins. The activation of the ERK pathway occurs either in a G-protein-dependent or a beta-arrestin-dependent manner and is regulated by agonist-specific receptor phosphorylation. Acts as a class A G-protein coupled receptor (GPCR) which dissociates from beta-arrestin at or near the plasma membrane and undergoes rapid recycling. Receptor down-regulation pathways are varying with the agonist and occur dependent or independent of G-protein coupling. Endogenous ligands induce rapid desensitization, endocytosis and recycling. Heterooligomerization with other GPCRs can modulate agonist binding, signaling and trafficking properties. Involved in neurogenesis. This Pan troglodytes (Chimpanzee) protein is Mu-type opioid receptor (OPRM1).